A 122-amino-acid polypeptide reads, in one-letter code: UPF0102 protein CKL_1410 (122 aa).

Belongs to the UPF0102 family.

The sequence is that of UPF0102 protein CKL_1410 from Clostridium kluyveri (strain ATCC 8527 / DSM 555 / NBRC 12016 / NCIMB 10680 / K1).